We begin with the raw amino-acid sequence, 350 residues long: Ribosome production factor 2 homolog (350 aa).

The Brix domain maps to 28-266; the sequence is KTCLFLRGTT…LGRMREPDPA (239 aa). Residues 192–202 are compositionally biased toward polar residues; the sequence is PTSSTSTNNDG. 2 disordered regions span residues 192–219 and 301–350; these read PTSSTSTNNDGENPAPLPGMTDPRSIDP and MGKT…KVKG.

It belongs to the RPF2 family. As to quaternary structure, component of a hexameric 5S RNP precursor complex, composed of 5S RNA, RRS1, RPF2, RPL5, RPL11 and SYO1; this complex acts as a precursor for ribosome assembly.

Its subcellular location is the nucleus. The protein localises to the nucleolus. Involved in ribosomal large subunit assembly. This is Ribosome production factor 2 homolog from Chaetomium thermophilum (strain DSM 1495 / CBS 144.50 / IMI 039719) (Thermochaetoides thermophila).